An 85-amino-acid polypeptide reads, in one-letter code: ATP synthase subunit c (85 aa).

The next 2 helical transmembrane spans lie at 10–30 (GLALLGKYLGAGLCMGIGAIG) and 65–85 (AVAETTGIYSLLIAFMILLVV).

It belongs to the ATPase C chain family. F-type ATPases have 2 components, F(1) - the catalytic core - and F(0) - the membrane proton channel. F(1) has five subunits: alpha(3), beta(3), gamma(1), delta(1), epsilon(1). F(0) has three main subunits: a(1), b(2) and c(10-14). The alpha and beta chains form an alternating ring which encloses part of the gamma chain. F(1) is attached to F(0) by a central stalk formed by the gamma and epsilon chains, while a peripheral stalk is formed by the delta and b chains.

Its subcellular location is the cell inner membrane. F(1)F(0) ATP synthase produces ATP from ADP in the presence of a proton or sodium gradient. F-type ATPases consist of two structural domains, F(1) containing the extramembraneous catalytic core and F(0) containing the membrane proton channel, linked together by a central stalk and a peripheral stalk. During catalysis, ATP synthesis in the catalytic domain of F(1) is coupled via a rotary mechanism of the central stalk subunits to proton translocation. Functionally, key component of the F(0) channel; it plays a direct role in translocation across the membrane. A homomeric c-ring of between 10-14 subunits forms the central stalk rotor element with the F(1) delta and epsilon subunits. This Thermotoga maritima (strain ATCC 43589 / DSM 3109 / JCM 10099 / NBRC 100826 / MSB8) protein is ATP synthase subunit c.